The following is a 280-amino-acid chain: MGLKVSSSLLCLTILLAVSSIVSAVNITRVLEKYPEFSTMTELLAKTELTPIINKRQTITVLALNNDAIGSISGRPEEEVKNILMNHVVLDYFDELKLKALKEKSTLLTTLYQSTGLGQQQNGFLNCTKSNGKIYFGSGVKGAPQTAEYITTVFRNPYNLSVVQISMPIVAPGLGSPVKVPPPPPMSSPPAPSPKKGAATPAPAPADEGDYADAPPGLAPETAPASAPSESDSPAPAPDKSGKKKMAAADEAEPPSSASNTGLSFGAVLVLGFVASFVGF.

The N-terminal stretch at 1 to 24 is a signal peptide; sequence MGLKVSSSLLCLTILLAVSSIVSA. Residues 25–169 enclose the FAS1 domain; it reads VNITRVLEKY…LSVVQISMPI (145 aa). N-linked (GlcNAc...) asparagine glycosylation is found at Asn-26, Asn-126, and Asn-159. The span at 180–193 shows a compositional bias: pro residues; that stretch reads VPPPPPMSSPPAPS. Residues 180-262 are disordered; the sequence is VPPPPPMSSP…EPPSSASNTG (83 aa). Positions 219–234 are enriched in low complexity; the sequence is APETAPASAPSESDSP. A lipid anchor (GPI-anchor amidated serine) is attached at Ser-256. A propeptide spans 257–280 (removed in mature form); sequence SASNTGLSFGAVLVLGFVASFVGF.

The protein belongs to the fasciclin-like AGP family.

Its subcellular location is the cell membrane. Functionally, may be a cell surface adhesion protein. In Arabidopsis thaliana (Mouse-ear cress), this protein is Fasciclin-like arabinogalactan protein 3 (FLA3).